Consider the following 1117-residue polypeptide: Zinc finger E-box-binding homeobox 1 (1117 aa).

Disordered stretches follow at residues 1–103 (MADG…QNHD) and 122–143 (APEE…NGTP). Positions 15–30 (PRRNNVTNYNTVVEAN) are enriched in low complexity. A phosphoserine mark is found at serine 31 and serine 33. The C2H2-type 1 zinc-finger motif lies at 150–173 (LTCPYCDRGYKRFTSLKEHIKYRH). Glycyl lysine isopeptide (Lys-Gly) (interchain with G-Cter in SUMO2) cross-links involve residues lysine 166 and lysine 175. 2 C2H2-type zinc fingers span residues 180 to 202 (FSCS…MTSH) and 220 to 242 (FKCT…LRIH). The C2H2-type 4; atypical zinc finger occupies 248–272 (YECPNCKKRFSHSGSYSSHISSKKC). The segment at 278–307 (VNGRPRSGLKTSQCSSPSLSTSPGSPTRPQ) is disordered. Lysine 287 is covalently cross-linked (Glycyl lysine isopeptide (Lys-Gly) (interchain with G-Cter in SUMO2)). Low complexity predominate over residues 288 to 304 (TSQCSSPSLSTSPGSPT). A phosphoserine mark is found at serine 293 and serine 302. Glycyl lysine isopeptide (Lys-Gly) (interchain with G-Cter in SUMO2) cross-links involve residues lysine 311 and lysine 315. A Glycyl lysine isopeptide (Lys-Gly) (interchain with G-Cter in SUMO); alternate cross-link involves residue lysine 327. Lysine 327 participates in a covalent cross-link: Glycyl lysine isopeptide (Lys-Gly) (interchain with G-Cter in SUMO2); alternate. Glycyl lysine isopeptide (Lys-Gly) (interchain with G-Cter in SUMO2) cross-links involve residues lysine 419, lysine 473, lysine 484, lysine 495, and lysine 528. 3 disordered regions span residues 476–501 (IPAP…TDKS), 528–566 (KHYD…SQPP), and 613–687 (GQIP…SPLN). Basic and acidic residues predominate over residues 484-501 (KSEKLPEDLTVKSETDKS). The segment at residues 559-618 (DLSPSQPPLKNLLSLLKAYYALNAQPSTEELSKIADSVNLPLDGVKKWFEKMQAGQIPGQ) is a DNA-binding region (homeobox; atypical). Phosphoserine occurs at positions 657, 664, 671, and 678. Over residues 673–687 (MNGSRSCTSSPSPLN) the composition is skewed to polar residues. Threonine 680 bears the Phosphothreonine mark. Serine 682 carries the post-translational modification Phosphoserine. Lysine 752 participates in a covalent cross-link: Glycyl lysine isopeptide (Lys-Gly) (interchain with G-Cter in SUMO); alternate. Lysine 752 participates in a covalent cross-link: Glycyl lysine isopeptide (Lys-Gly) (interchain with G-Cter in SUMO2); alternate. Positions 834–876 (PPVKVIQPNGNQDERQDTSSEGVSTVEDQNDSDSTPPKKKTRK) are disordered. Over residues 852–868 (SSEGVSTVEDQNDSDST) the composition is skewed to polar residues. 2 consecutive C2H2-type zinc fingers follow at residues 882 to 904 (YACD…KYEH) and 910 to 932 (HECG…MRLH). Residues 938–959 (YQCDKCGKRFSHSGSYSQHMNH) form a C2H2-type 7; atypical zinc finger. The segment at 991–1117 (EHVGARASPS…QLSEEKTNEA (127 aa)) is disordered. 3 stretches are compositionally biased toward acidic residues: residues 1013–1032 (EEDE…MEEL), 1042–1069 (QGEE…DEAE), and 1098–1109 (SEMESESESEQL).

It belongs to the delta-EF1/ZFH-1 C2H2-type zinc-finger family. Interacts (via N-terminus) with SMARCA4/BRG1. Post-translationally, ubiquitinated, leading to degradation in a proteasome-dependent manner. Deubiquitinated by USP51, leading to stabilization. As to expression, expressed in the external germinal layer (EGL) and internal granular layer (IGL) of the cerebellum (at protein level).

It localises to the nucleus. In terms of biological role, acts as a transcriptional repressor. Binds to E-box sequences in the immunoglobulin heavy chain enhancer as well as in the regulatory regions of many other tissue-specific genes. Represses E-cadherin promoter and induces an epithelial-mesenchymal transition (EMT) by recruiting SMARCA4/BRG1. Represses BCL6 transcription in the presence of the corepressor CTBP1. Positively regulates neuronal differentiation. Represses RCOR1 transcription activation during neurogenesis. Represses transcription by binding to the E box (5'-CANNTG-3'). In the absence of TGFB1, acts as a repressor of COL1A2 transcription via binding to the E-box in the upstream enhancer region. Promotes tumorigenicity by repressing stemness-inhibiting microRNAs. This is Zinc finger E-box-binding homeobox 1 from Mus musculus (Mouse).